The sequence spans 564 residues: Arginine--tRNA ligase (564 aa).

Positions 130–140 (ANPTGSLHIGH) match the 'HIGH' region motif.

This sequence belongs to the class-I aminoacyl-tRNA synthetase family. As to quaternary structure, monomer.

The protein resides in the cytoplasm. It carries out the reaction tRNA(Arg) + L-arginine + ATP = L-arginyl-tRNA(Arg) + AMP + diphosphate. The polypeptide is Arginine--tRNA ligase (Malacoplasma penetrans (strain HF-2) (Mycoplasma penetrans)).